The primary structure comprises 79 residues: MKQTIVIVLLAAVAMMACLQMVAAEPLPEAAPAPSPLAEAEALASPIAEALANPEALASPEAGRILSFIKGLAEHLGKK.

Residues 1–24 form the signal peptide; sequence MKQTIVIVLLAAVAMMACLQMVAA. AXPX repeat units lie at residues 24 to 27, 30 to 33, 44 to 47, 52 to 55, and 58 to 61; these read AEPL, AAPA, ASPI, ANPE, and ASPE. Residues 25 to 62 constitute a propeptide that is removed on maturation; the sequence is EPLPEAAPAPSPLAEAEALASPIAEALANPEALASPEA. Leu-76 carries the leucine amide modification.

Expressed by the venom gland.

It localises to the secreted. The protein localises to the target cell membrane. Antimicrobial peptide with strong activity against the fungi C.albicans (MIC=6 uM) and B.cinerea (MIC=10 uM), and weaker activity against the Gram-negative bacterium E.coli (MIC=97 uM) and Gram-positive bacterium S.aureus (MIC=97 uM). Shows cytolytic activity against insect cell lines. Has potent hemolytic activity against ovine erythrocytes (80% at 50 uM), but has no hemolytic activity against human erythrocytes. In vivo, peptide injection in the vicinity of the head and thorax of lepidopteran larvae induces feeding disorder that lasts one or two days before recovering. This chain is Eumenine mastoparan-OD, found in Orancistrocerus drewseni (Solitary wasp).